We begin with the raw amino-acid sequence, 1093 residues long: Leucine-rich repeats and immunoglobulin-like domains protein 1 (1093 aa).

The N-terminal stretch at 1-34 is a signal peptide; the sequence is MARPVRGGLGAPRRSPCLLLLWLLLLRLEPVTAA. The LRRNT domain maps to 35–68; that stretch reads AGPRAPCAAACTCAGDSLDCGGRGLAALPGDLPS. Over 35 to 794 the chain is Extracellular; the sequence is AGPRAPCAAA…GCRKDGTTVG (760 aa). C45 and C54 are disulfide-bonded. LRR repeat units follow at residues 69 to 90, 93 to 114, 116 to 137, 140 to 161, 164 to 185, 189 to 210, 212 to 233, 236 to 257, 260 to 281, 284 to 305, 308 to 329, 332 to 353, 356 to 378, 383 to 404, and 407 to 428; these read WTRS…GFED, NLQE…GAAS, HVVS…QLKA, SLEV…CFPH, PIKE…AFDG, SLLT…AFKL, RLTQ…TFQG, SLEV…AFWG, KMHV…SLYG, ALHQ…GWSF, KLHE…SLAE, SLSV…AFKG, SLRV…SGAF, SLSK…AFSG, and GLEH…AFVK. N74 is a glycosylation site (N-linked (GlcNAc...) asparagine). The N-linked (GlcNAc...) asparagine glycan is linked to N150. Residue N246 is glycosylated (N-linked (GlcNAc...) asparagine). N-linked (GlcNAc...) asparagine glycosylation is found at N292 and N318. The LRRCT domain occupies 440 to 491; it reads DSFLCDCQLKWLPPWLIGRMLQAFVTATCAHPESLKGQSIFSVPPESFVCDD. 4 disulfide bridges follow: C444–C468, C446–C489, C516–C577, and C620–C672. 3 Ig-like C2-type domains span residues 495-594, 599-688, and 693-779; these read PQII…ARLT, PSFT…ATLT, and PSLV…SQLS. A glycan (N-linked (GlcNAc...) asparagine) is linked at N684. C714 and C763 are oxidised to a cystine. A helical membrane pass occupies residues 795 to 815; that stretch reads IFTIAVVSSIVLTSLVWVCII. The Cytoplasmic portion of the chain corresponds to 816–1093; that stretch reads YQTRKKSEEY…RVPLLLAPKS (278 aa). Disordered stretches follow at residues 946-983 and 1063-1093; these read AFHP…CSRT and PKAC…APKS.

As to quaternary structure, interacts (via extracellular LRR and Ig-like domains) with EGFR/ERBB1, ERBB2, ERBB3 and ERBB4 (via extracellular domain). The physiological relevance of the interaction is controversial; LRIG1 may have low affinity for EGFR, and interaction may occur only when high levels of both proteins are present. In terms of tissue distribution, widely expressed.

Its subcellular location is the cell membrane. Acts as a feedback negative regulator of signaling by receptor tyrosine kinases, through a mechanism that involves enhancement of receptor ubiquitination and accelerated intracellular degradation. The chain is Leucine-rich repeats and immunoglobulin-like domains protein 1 from Homo sapiens (Human).